The chain runs to 257 residues: Ribonuclease HII (257 aa).

Positions 72-257 (TYIAGIDEVG…FAPIKDMIQK (186 aa)) constitute an RNase H type-2 domain. A divalent metal cation contacts are provided by D78, E79, and D170.

The protein belongs to the RNase HII family. It depends on Mn(2+) as a cofactor. Mg(2+) serves as cofactor.

The protein resides in the cytoplasm. It catalyses the reaction Endonucleolytic cleavage to 5'-phosphomonoester.. Endonuclease that specifically degrades the RNA of RNA-DNA hybrids. The sequence is that of Ribonuclease HII from Bacillus cereus (strain AH820).